A 303-amino-acid polypeptide reads, in one-letter code: UDP-N-acetylenolpyruvoylglucosamine reductase (303 aa).

Residues 27–191 (VGGPAARLYK…ISAKLQLTPG (165 aa)) form the FAD-binding PCMH-type domain. R171 is an active-site residue. The active-site Proton donor is the S220. E291 is a catalytic residue.

The protein belongs to the MurB family. FAD is required as a cofactor.

The protein localises to the cytoplasm. It catalyses the reaction UDP-N-acetyl-alpha-D-muramate + NADP(+) = UDP-N-acetyl-3-O-(1-carboxyvinyl)-alpha-D-glucosamine + NADPH + H(+). It participates in cell wall biogenesis; peptidoglycan biosynthesis. Its function is as follows. Cell wall formation. The chain is UDP-N-acetylenolpyruvoylglucosamine reductase from Legionella pneumophila (strain Paris).